Here is a 956-residue protein sequence, read N- to C-terminus: Golgin candidate 5 (956 aa).

Disordered stretches follow at residues 70–230 and 278–298; these read MSFM…QHKI and IFES…SSDE. 2 stretches are compositionally biased toward basic and acidic residues: residues 77 to 89 and 118 to 129; these read SDEK…DSVR and ANKETNVRREAD. Composition is skewed to polar residues over residues 160–177 and 184–193; these read EYSL…SLQP and TASQDSQPEQ. Residues 206–219 show a composition bias toward basic and acidic residues; sequence SEAKEVTVENKDTV. Positions 333-765 form a coiled coil; that stretch reads SDSADVILEL…LIQKDLEREK (433 aa). At serine 793 the chain carries Phosphoserine. Positions 851–951 form a coiled coil; sequence SAYEATLRQK…EMYREQVNML (101 aa).

Interacts with RABH1B and RABH1C, but not with RABD1 or RABD2A.

It is found in the golgi apparatus. Its subcellular location is the cytoplasm. Golgi matrix protein playing a role in tethering of vesicles to Golgi membranes and in maintaining the overall structure of the Golgi apparatus. The sequence is that of Golgin candidate 5 (GC5) from Arabidopsis thaliana (Mouse-ear cress).